The primary structure comprises 1099 residues: ATP-dependent helicase/deoxyribonuclease subunit B (1099 aa).

Positions 766, 1056, 1059, and 1065 each coordinate [4Fe-4S] cluster.

The protein belongs to the helicase family. AddB/RexB type 2 subfamily. As to quaternary structure, heterodimer of AddA and RexB. The cofactor is Mg(2+). [4Fe-4S] cluster serves as cofactor.

Its function is as follows. The heterodimer acts as both an ATP-dependent DNA helicase and an ATP-dependent, dual-direction single-stranded exonuclease. Recognizes the chi site generating a DNA molecule suitable for the initiation of homologous recombination. This subunit has 5' -&gt; 3' nuclease activity but not helicase activity. The sequence is that of ATP-dependent helicase/deoxyribonuclease subunit B from Lactococcus lactis subsp. cremoris (strain SK11).